A 171-amino-acid polypeptide reads, in one-letter code: Adenine phosphoribosyltransferase (171 aa).

It belongs to the purine/pyrimidine phosphoribosyltransferase family. Homodimer.

Its subcellular location is the cytoplasm. It carries out the reaction AMP + diphosphate = 5-phospho-alpha-D-ribose 1-diphosphate + adenine. It participates in purine metabolism; AMP biosynthesis via salvage pathway; AMP from adenine: step 1/1. In terms of biological role, catalyzes a salvage reaction resulting in the formation of AMP, that is energically less costly than de novo synthesis. The polypeptide is Adenine phosphoribosyltransferase (Rhodospirillum centenum (strain ATCC 51521 / SW)).